A 473-amino-acid polypeptide reads, in one-letter code: Photosystem II CP43 reaction center protein (473 aa).

Residues 1 to 14 (MKTLYSLRRFYPVE) constitute a propeptide that is removed on maturation. N-acetylthreonine is present on Thr15. Thr15 is subject to Phosphothreonine. 5 helical membrane passes run 69-93 (LFEVAHFVPEKPMYEQGLILLPHLA), 134-155 (LLGPETLEESFPFFGYVWKDRN), 178-200 (KALYFGGVYDTWAPGGGDVRKIT), 255-275 (KPFAWARRALVWSGEAYLSYS), and 291-312 (WFNNTAYPSEFYGPTGPEASQA). Residue Glu367 coordinates [CaMn4O5] cluster. The chain crosses the membrane as a helical span at residues 447–471 (RARAAAAGFEKGIDRDFEPALSMTP).

Belongs to the PsbB/PsbC family. PsbC subfamily. As to quaternary structure, PSII is composed of 1 copy each of membrane proteins PsbA, PsbB, PsbC, PsbD, PsbE, PsbF, PsbH, PsbI, PsbJ, PsbK, PsbL, PsbM, PsbT, PsbX, PsbY, PsbZ, Psb30/Ycf12, at least 3 peripheral proteins of the oxygen-evolving complex and a large number of cofactors. It forms dimeric complexes. The cofactor is Binds multiple chlorophylls and provides some of the ligands for the Ca-4Mn-5O cluster of the oxygen-evolving complex. It may also provide a ligand for a Cl- that is required for oxygen evolution. PSII binds additional chlorophylls, carotenoids and specific lipids..

Its subcellular location is the plastid. The protein resides in the chloroplast thylakoid membrane. One of the components of the core complex of photosystem II (PSII). It binds chlorophyll and helps catalyze the primary light-induced photochemical processes of PSII. PSII is a light-driven water:plastoquinone oxidoreductase, using light energy to abstract electrons from H(2)O, generating O(2) and a proton gradient subsequently used for ATP formation. This Oenothera argillicola (Appalachian evening primrose) protein is Photosystem II CP43 reaction center protein.